Consider the following 206-residue polypeptide: MSERSVSKQDQEKRWYTVLAPEEFDRAELGETLAEEPDQVYDRTIQAALSDVRDGGDNNIKLTFQIDDVGSDSASTQFVQAELTRDYQRSLVRRGSSKVAVTVTVLTTDDYRVRIQPVAYTTKQADQSQQHAIRRTMIDLVEEAGEERTFEALLNSIIEGRLSSAIYDEANTIYPLRRVEVEKATLEAHPEEVHEEEETAVDFSGE.

It belongs to the eukaryotic ribosomal protein eS1 family.

The chain is Small ribosomal subunit protein eS1 from Halobacterium salinarum (strain ATCC 29341 / DSM 671 / R1).